The primary structure comprises 320 residues: MRQTKTGILLANLGTPDAPTPEAVKRYLKQFLSDRRVVDTPRLLWWPLLRGVILPLRSPRVAKLYQSIWMDGGSPLMVYSREQQQALAARLPDTPVALGMSYGSPSLESAVDELLASDVDHIVVLPLYPQYSCSTVGAVWDELGRILARKRRIPGISFIRDYADDGAYIDALAKSARESFARHGEPDLLLLSYHGIPQRYADEGDDYPQRCRDTTRELVSALGLPPEKVMMTFQSRFGREPWLTPYTDETLKMLGEKGTGHIQVMCPGFAADCLETLEEIAEQNREIFLEAGGKKYAYIQALNATPEHIDMILKLTAPYR.

Fe cation-binding residues include histidine 194 and glutamate 275.

Belongs to the ferrochelatase family. As to quaternary structure, monomer.

The protein resides in the cytoplasm. It carries out the reaction heme b + 2 H(+) = protoporphyrin IX + Fe(2+). Its pathway is porphyrin-containing compound metabolism; protoheme biosynthesis; protoheme from protoporphyrin-IX: step 1/1. Its function is as follows. Catalyzes the ferrous insertion into protoporphyrin IX. The chain is Ferrochelatase from Salmonella typhi.